The primary structure comprises 332 residues: CRISPR-associated endonuclease Cas1 3 (332 aa).

Positions 159, 224, and 239 each coordinate Mn(2+).

Belongs to the CRISPR-associated endonuclease Cas1 family. Homodimer, forms a heterotetramer with a Cas2 homodimer. It depends on Mg(2+) as a cofactor. Mn(2+) is required as a cofactor.

Its function is as follows. CRISPR (clustered regularly interspaced short palindromic repeat), is an adaptive immune system that provides protection against mobile genetic elements (viruses, transposable elements and conjugative plasmids). CRISPR clusters contain spacers, sequences complementary to antecedent mobile elements, and target invading nucleic acids. CRISPR clusters are transcribed and processed into CRISPR RNA (crRNA). Acts as a dsDNA endonuclease. Involved in the integration of spacer DNA into the CRISPR cassette. The polypeptide is CRISPR-associated endonuclease Cas1 3 (Thermus thermophilus (strain ATCC 27634 / DSM 579 / HB8)).